We begin with the raw amino-acid sequence, 382 residues long: Galactokinase (382 aa).

34–37 (EHTD) contributes to the substrate binding site. 124-130 (GAGLSSS) contacts ATP. Mg(2+) contacts are provided by S130 and E162. The active-site Proton acceptor is D174. Y223 serves as a coordination point for substrate.

The protein belongs to the GHMP kinase family. GalK subfamily.

The protein resides in the cytoplasm. It carries out the reaction alpha-D-galactose + ATP = alpha-D-galactose 1-phosphate + ADP + H(+). Its pathway is carbohydrate metabolism; galactose metabolism. Catalyzes the transfer of the gamma-phosphate of ATP to D-galactose to form alpha-D-galactose-1-phosphate (Gal-1-P). In Escherichia fergusonii (strain ATCC 35469 / DSM 13698 / CCUG 18766 / IAM 14443 / JCM 21226 / LMG 7866 / NBRC 102419 / NCTC 12128 / CDC 0568-73), this protein is Galactokinase.